Consider the following 388-residue polypeptide: Bifunctional enzyme IspD/IspF (388 aa).

The 2-C-methyl-D-erythritol 4-phosphate cytidylyltransferase stretch occupies residues M1–R228. Residues R228–A388 are 2-C-methyl-D-erythritol 2,4-cyclodiphosphate synthase. 2 residues coordinate a divalent metal cation: D234 and H236. Residues D234–H236 and H260–S261 each bind 4-CDP-2-C-methyl-D-erythritol 2-phosphate. Residue H268 coordinates a divalent metal cation. 4-CDP-2-C-methyl-D-erythritol 2-phosphate-binding positions include D282–G284, T358–E361, F365, and R368.

This sequence in the N-terminal section; belongs to the IspD/TarI cytidylyltransferase family. IspD subfamily. It in the C-terminal section; belongs to the IspF family. Requires a divalent metal cation as cofactor.

The enzyme catalyses 2-C-methyl-D-erythritol 4-phosphate + CTP + H(+) = 4-CDP-2-C-methyl-D-erythritol + diphosphate. The catalysed reaction is 4-CDP-2-C-methyl-D-erythritol 2-phosphate = 2-C-methyl-D-erythritol 2,4-cyclic diphosphate + CMP. The protein operates within isoprenoid biosynthesis; isopentenyl diphosphate biosynthesis via DXP pathway; isopentenyl diphosphate from 1-deoxy-D-xylulose 5-phosphate: step 2/6. It participates in isoprenoid biosynthesis; isopentenyl diphosphate biosynthesis via DXP pathway; isopentenyl diphosphate from 1-deoxy-D-xylulose 5-phosphate: step 4/6. Its function is as follows. Bifunctional enzyme that catalyzes the formation of 4-diphosphocytidyl-2-C-methyl-D-erythritol from CTP and 2-C-methyl-D-erythritol 4-phosphate (MEP) (IspD), and catalyzes the conversion of 4-diphosphocytidyl-2-C-methyl-D-erythritol 2-phosphate (CDP-ME2P) to 2-C-methyl-D-erythritol 2,4-cyclodiphosphate (ME-CPP) with a corresponding release of cytidine 5-monophosphate (CMP) (IspF). This chain is Bifunctional enzyme IspD/IspF, found in Gluconobacter oxydans (strain 621H) (Gluconobacter suboxydans).